A 139-amino-acid chain; its full sequence is Classical arabinogalactan protein 3 (139 aa).

The signal sequence occupies residues 1-21 (MALKTLQALIFLGLFAASCLA). The residue at position 22 (Gln22) is a Pyrrolidone carboxylic acid. Residues 30 to 115 (TFLPPVESPS…PAPRADGPVA (86 aa)) form a disordered region. Pro residues-rich tracts occupy residues 46–77 (AEPP…PPTT) and 97–107 (PSGPTPAPAPA). Asp116 carries the GPI-anchor amidated aspartate lipid modification. Positions 117-139 (SALTNKAFLVSTVIAGALYAVLA) are cleaved as a propeptide — removed in mature form.

This sequence belongs to the classical AGP family. In terms of processing, O-glycosylated on the hydroxyproline residues. In terms of tissue distribution, expressed at a low level in roots.

Its subcellular location is the cell membrane. Its function is as follows. Proteoglycan that seems to be implicated in diverse developmental roles such as differentiation, cell-cell recognition, embryogenesis and programmed cell death. The polypeptide is Classical arabinogalactan protein 3 (AGP3) (Arabidopsis thaliana (Mouse-ear cress)).